The sequence spans 312 residues: Glutathione synthetase (312 aa).

The region spanning 125-309 (KIFVTEFPDL…IAALFWDAVE (185 aa)) is the ATP-grasp domain. 151-207 (RREFGDIILKPLYGNGGAGVFHLADGDRNLTSLLEMFGQLFREPFIAQRYLKDVRAG) serves as a coordination point for ATP. Glutamate 280 and asparagine 282 together coordinate Mg(2+).

Belongs to the prokaryotic GSH synthase family. The cofactor is Mg(2+). Mn(2+) is required as a cofactor.

It carries out the reaction gamma-L-glutamyl-L-cysteine + glycine + ATP = glutathione + ADP + phosphate + H(+). The protein operates within sulfur metabolism; glutathione biosynthesis; glutathione from L-cysteine and L-glutamate: step 2/2. The sequence is that of Glutathione synthetase from Brucella melitensis biotype 1 (strain ATCC 23456 / CCUG 17765 / NCTC 10094 / 16M).